Consider the following 280-residue polypeptide: 2-dehydro-3-deoxyphosphooctonate aldolase 2 (280 aa).

This sequence belongs to the KdsA family.

The protein resides in the cytoplasm. It carries out the reaction D-arabinose 5-phosphate + phosphoenolpyruvate + H2O = 3-deoxy-alpha-D-manno-2-octulosonate-8-phosphate + phosphate. The protein operates within carbohydrate biosynthesis; 3-deoxy-D-manno-octulosonate biosynthesis; 3-deoxy-D-manno-octulosonate from D-ribulose 5-phosphate: step 2/3. It functions in the pathway bacterial outer membrane biogenesis; lipopolysaccharide biosynthesis. This is 2-dehydro-3-deoxyphosphooctonate aldolase 2 (kdsA2) from Pseudomonas putida (strain ATCC 47054 / DSM 6125 / CFBP 8728 / NCIMB 11950 / KT2440).